The following is a 362-amino-acid chain: tRNA-specific 2-thiouridylase MnmA (362 aa).

ATP-binding positions include glycine 9–serine 16 and methionine 35. Residues asparagine 95–aspartate 97 are interaction with target base in tRNA. The active-site Nucleophile is the cysteine 100. Cysteine 100 and cysteine 196 are oxidised to a cystine. Glycine 124 contacts ATP. Positions lysine 146 to glutamine 148 are interaction with tRNA. Residue cysteine 196 is the Cysteine persulfide intermediate of the active site. The interaction with tRNA stretch occupies residues arginine 308–tyrosine 309.

This sequence belongs to the MnmA/TRMU family.

Its subcellular location is the cytoplasm. The enzyme catalyses S-sulfanyl-L-cysteinyl-[protein] + uridine(34) in tRNA + AH2 + ATP = 2-thiouridine(34) in tRNA + L-cysteinyl-[protein] + A + AMP + diphosphate + H(+). In terms of biological role, catalyzes the 2-thiolation of uridine at the wobble position (U34) of tRNA, leading to the formation of s(2)U34. The chain is tRNA-specific 2-thiouridylase MnmA from Nitrosomonas europaea (strain ATCC 19718 / CIP 103999 / KCTC 2705 / NBRC 14298).